A 116-amino-acid chain; its full sequence is Large ribosomal subunit protein bL20 (116 aa).

Belongs to the bacterial ribosomal protein bL20 family.

Binds directly to 23S ribosomal RNA and is necessary for the in vitro assembly process of the 50S ribosomal subunit. It is not involved in the protein synthesizing functions of that subunit. The protein is Large ribosomal subunit protein bL20 of Mycoplasmopsis synoviae (strain 53) (Mycoplasma synoviae).